Consider the following 98-residue polypeptide: ESAT-6-like protein EsxW (98 aa).

This sequence belongs to the WXG100 family. CFP-10 subfamily. As to quaternary structure, forms a tight 1:1 complex with EsxV. The complex is destabilized at low pH. Unfolding of the proteins is required for dissociation of the complex and membrane binding.

It localises to the secreted. This is ESAT-6-like protein EsxW from Mycobacterium tuberculosis (strain ATCC 25618 / H37Rv).